Here is a 767-residue protein sequence, read N- to C-terminus: 5-methyltetrahydropteroyltriglutamate--homocysteine methyltransferase (767 aa).

2 residues coordinate 5-methyltetrahydropteroyltri-L-glutamate: lysine 19 and asparagine 126. L-homocysteine contacts are provided by residues 446–448 and glutamate 499; that span reads IGS. L-methionine is bound by residues 446 to 448 and glutamate 499; that span reads IGS. 5-methyltetrahydropteroyltri-L-glutamate contacts are provided by residues aspartate 504, tyrosine 527, 530–531, and tryptophan 576; that span reads RY. Residue aspartate 614 participates in L-homocysteine binding. L-methionine is bound at residue aspartate 614. Zn(2+)-binding residues include histidine 657, cysteine 659, and glutamate 679. Histidine 707 (proton donor) is an active-site residue. Residue cysteine 739 participates in Zn(2+) binding.

Belongs to the vitamin-B12 independent methionine synthase family. Zn(2+) serves as cofactor.

The catalysed reaction is 5-methyltetrahydropteroyltri-L-glutamate + L-homocysteine = tetrahydropteroyltri-L-glutamate + L-methionine. It functions in the pathway amino-acid biosynthesis; L-methionine biosynthesis via de novo pathway; L-methionine from L-homocysteine (MetE route): step 1/1. Its activity is regulated as follows. Inhibited weakly by methotrexate. Catalyzes the transfer of a methyl group from 5-methyltetrahydrofolate to homocysteine resulting in methionine formation. This chain is 5-methyltetrahydropteroyltriglutamate--homocysteine methyltransferase, found in Candida albicans (strain SC5314 / ATCC MYA-2876) (Yeast).